Here is a 144-residue protein sequence, read N- to C-terminus: ATP synthase subunit 9, mitochondrial (144 aa).

The transit peptide at 1-63 directs the protein to the mitochondrion; the sequence is MASTRVLASR…ATRQITQKRA (63 aa). 2 helical membrane-spanning segments follow: residues 83-103 and 120-140; these read TAAI…AALL and AILG…VALM.

It belongs to the ATPase C chain family. F-type ATPases have 2 components, CF(1) - the catalytic core - and CF(0) - the membrane proton channel. CF(1) has five subunits: alpha(3), beta(3), gamma(1), delta(1), epsilon(1). CF(0) has three main subunits: a, b and c.

Its subcellular location is the mitochondrion membrane. Its function is as follows. Mitochondrial membrane ATP synthase (F(1)F(0) ATP synthase or Complex V) produces ATP from ADP in the presence of a proton gradient across the membrane which is generated by electron transport complexes of the respiratory chain. F-type ATPases consist of two structural domains, F(1) - containing the extramembraneous catalytic core and F(0) - containing the membrane proton channel, linked together by a central stalk and a peripheral stalk. During catalysis, ATP synthesis in the catalytic domain of F(1) is coupled via a rotary mechanism of the central stalk subunits to proton translocation. Part of the complex F(0) domain. A homomeric c-ring of probably 10 subunits is part of the complex rotary element. The protein is ATP synthase subunit 9, mitochondrial (ATP9) of Podospora anserina (Pleurage anserina).